A 276-amino-acid chain; its full sequence is Halorhodopsin (276 aa).

The propeptide occupies 1-21 (MTAASTTATTMLQATQSDVLQ). Over 22–25 (EIQS) the chain is Extracellular. Residues 26 to 51 (NFLLNSSIWVNIALAGVVILLFVAMG) traverse the membrane as a helical segment. At 52 to 57 (RDIESP) the chain is on the cytoplasmic side. A helical transmembrane segment spans residues 58-81 (RAKLIWVATMLVPLVSISSYAGLA). Topologically, residues 82–105 (SGLTVGFLQMPPGHALAGQEVLSP) are extracellular. The chain crosses the membrane as a helical span at residues 106–127 (WGRYLTWTFSTPMILLALGLLA). Topologically, residues 128 to 130 (DTD) are cytoplasmic. A helical membrane pass occupies residues 131–154 (IASLFTAITMDIGMCVTGLAAALI). At 155–157 (TSS) the chain is on the extracellular side. Residues 158–180 (HLLRWVFYGISCAFFVAVLYVLL) form a helical membrane-spanning segment. Topologically, residues 181–192 (VQWPADAEAAGT) are cytoplasmic. A helical transmembrane segment spans residues 193 to 216 (SEIFGTLKILTVVLWLGYPILWAL). The Extracellular portion of the chain corresponds to 217–225 (GSEGVALLS). Residues 226–254 (VGVTSWGYSGLDILAKYVFAFLLLRWVAA) form a helical membrane-spanning segment. Lys-241 is subject to N6-(retinylidene)lysine. Residues 255 to 276 (NEGAVSGSGMSIGSGGAAPADD) lie on the Cytoplasmic side of the membrane.

Belongs to the archaeal/bacterial/fungal opsin family.

Its subcellular location is the cell membrane. In terms of biological role, light-driven chloride pump. The polypeptide is Halorhodopsin (hop) (Halobacterium halobium (strain port)).